A 438-amino-acid chain; its full sequence is Transcription termination factor Rho (438 aa).

One can recognise a Rho RNA-BD domain in the interval 70-145 (YILFTGILEI…LKIEAINYLP (76 aa)). ATP contacts are provided by residues 188 to 193 (GKGQRA), 200 to 205 (RTGKTE), and R231.

The protein belongs to the Rho family. Homohexamer. The homohexamer assembles into an open ring structure.

In terms of biological role, facilitates transcription termination by a mechanism that involves Rho binding to the nascent RNA, activation of Rho's RNA-dependent ATPase activity, and release of the mRNA from the DNA template. This Helicobacter pylori (strain J99 / ATCC 700824) (Campylobacter pylori J99) protein is Transcription termination factor Rho.